The following is a 384-amino-acid chain: Substance-K receptor (384 aa).

Residues 1–32 (MGAHASVTDTNILSGLESNATGVTAFSMPGWQ) are Extracellular-facing. Asn-19 carries an N-linked (GlcNAc...) asparagine glycan. The chain crosses the membrane as a helical span at residues 33–56 (LALWATAYLALVLVAVTGNATVIW). Topologically, residues 57 to 69 (IILAHERMRTVTN) are cytoplasmic. The chain crosses the membrane as a helical span at residues 70 to 90 (YFIINLALADLCMAAFNATFN). At 91–107 (FIYASHNIWYFGSTFCY) the chain is on the extracellular side. A disulfide bridge connects residues Cys-106 and Cys-181. Residues 108 to 129 (FQNLFPVTAMFVSIYSMTAIAA) form a helical membrane-spanning segment. Residues 130 to 149 (DRYMAIVHPFQPRLSAPSTK) lie on the Cytoplasmic side of the membrane. Residues 150–170 (AVIAVIWLVALALASPQCFYS) form a helical membrane-spanning segment. The Extracellular portion of the chain corresponds to 171 to 196 (TITVDQGATKCVVAWPNDNGGKMLLL). A helical transmembrane segment spans residues 197–218 (YHLVVFVLIYFLPLVVMFAAYS). Residues 219–251 (VIGLTLWKRAVPRHQAHGANLRHLQAKKKFVKA) lie on the Cytoplasmic side of the membrane. Residues 252-272 (MVLVVVTFAICWLPYHLYFIL) traverse the membrane as a helical segment. Residues 273–290 (GTFQEDIYYRKFIQQVYL) are Extracellular-facing. A helical membrane pass occupies residues 291–310 (ALFWLAMSSTMYNPIIYCCL). At 311-384 (NHRFRSGFRL…GPQDGEPAGP (74 aa)) the chain is on the cytoplasmic side. The S-palmitoyl cysteine moiety is linked to residue Cys-324. The tract at residues 365–384 (HSEATNGQVGGPQDGEPAGP) is disordered.

It belongs to the G-protein coupled receptor 1 family.

It is found in the cell membrane. This is a receptor for the tachykinin neuropeptide substance K (neurokinin A). It is associated with G proteins that activate a phosphatidylinositol-calcium second messenger system. The rank order of affinity of this receptor to tachykinins is: substance K &gt; neuromedin-K &gt; substance P. This chain is Substance-K receptor (Tacr2), found in Mus musculus (Mouse).